The following is a 209-amino-acid chain: Thymidylate kinase (209 aa).

11–18 (GIEGAGKT) contributes to the ATP binding site.

The protein belongs to the thymidylate kinase family.

It catalyses the reaction dTMP + ATP = dTDP + ADP. In terms of biological role, phosphorylation of dTMP to form dTDP in both de novo and salvage pathways of dTTP synthesis. This chain is Thymidylate kinase (tmk), found in Pasteurella multocida (strain Pm70).